The primary structure comprises 135 residues: Large ribosomal subunit protein uL18 (135 aa).

The segment at 1 to 23 (MAQTQADTAARKPVGQSVSATRR) is disordered.

The protein belongs to the universal ribosomal protein uL18 family. In terms of assembly, part of the 50S ribosomal subunit; part of the 5S rRNA/L5/L18/L25 subcomplex. Contacts the 5S and 23S rRNAs.

Functionally, this is one of the proteins that bind and probably mediate the attachment of the 5S RNA into the large ribosomal subunit, where it forms part of the central protuberance. In Mycobacterium marinum (strain ATCC BAA-535 / M), this protein is Large ribosomal subunit protein uL18.